The primary structure comprises 218 residues: Ribosomal RNA small subunit methyltransferase G (218 aa).

S-adenosyl-L-methionine contacts are provided by residues G82, L87, 133-134 (VE), and R147.

The protein belongs to the methyltransferase superfamily. RNA methyltransferase RsmG family.

Its subcellular location is the cytoplasm. It catalyses the reaction guanosine(527) in 16S rRNA + S-adenosyl-L-methionine = N(7)-methylguanosine(527) in 16S rRNA + S-adenosyl-L-homocysteine. In terms of biological role, specifically methylates the N7 position of guanine in position 527 of 16S rRNA. This chain is Ribosomal RNA small subunit methyltransferase G, found in Leptothrix cholodnii (strain ATCC 51168 / LMG 8142 / SP-6) (Leptothrix discophora (strain SP-6)).